A 147-amino-acid chain; its full sequence is ATP synthase epsilon chain (147 aa).

Belongs to the ATPase epsilon chain family. F-type ATPases have 2 components, CF(1) - the catalytic core - and CF(0) - the membrane proton channel. CF(1) has five subunits: alpha(3), beta(3), gamma(1), delta(1), epsilon(1). CF(0) has three main subunits: a, b and c.

Its subcellular location is the cell inner membrane. Functionally, produces ATP from ADP in the presence of a proton gradient across the membrane. This chain is ATP synthase epsilon chain, found in Protochlamydia amoebophila (strain UWE25).